Consider the following 449-residue polypeptide: Tubulin alpha chain (449 aa).

The short motif at 1-4 (MREC) is the MREC motif element. Glutamine 11 serves as a coordination point for GTP. An N6-acetyllysine modification is found at lysine 40. GTP is bound by residues glutamate 71, serine 140, glycine 144, threonine 145, threonine 179, asparagine 206, and asparagine 228. Glutamate 71 lines the Mg(2+) pocket. Glutamate 254 is a catalytic residue. Residue glutamate 443 is modified to 5-glutamyl polyglutamate.

Belongs to the tubulin family. As to quaternary structure, dimer of alpha and beta chains. A typical microtubule is a hollow water-filled tube with an outer diameter of 25 nm and an inner diameter of 15 nM. Alpha-beta heterodimers associate head-to-tail to form protofilaments running lengthwise along the microtubule wall with the beta-tubulin subunit facing the microtubule plus end conferring a structural polarity. Microtubules usually have 13 protofilaments but different protofilament numbers can be found in some organisms and specialized cells. The cofactor is Mg(2+). In terms of processing, some glutamate residues at the C-terminus are polyglycylated, resulting in polyglycine chains on the gamma-carboxyl group. Glycylation is mainly limited to tubulin incorporated into axonemes (cilia and flagella) whereas glutamylation is prevalent in neuronal cells, centrioles, axonemes, and the mitotic spindle. Both modifications can coexist on the same protein on adjacent residues, and lowering polyglycylation levels increases polyglutamylation, and reciprocally. The precise function of polyglycylation is still unclear. Some glutamate residues at the C-terminus are polyglutamylated, resulting in polyglutamate chains on the gamma-carboxyl group. Polyglutamylation plays a key role in microtubule severing by spastin (SPAST). SPAST preferentially recognizes and acts on microtubules decorated with short polyglutamate tails: severing activity by SPAST increases as the number of glutamates per tubulin rises from one to eight, but decreases beyond this glutamylation threshold. Post-translationally, acetylation of alpha chains at Lys-40 is located inside the microtubule lumen. This modification has been correlated with increased microtubule stability, intracellular transport and ciliary assembly. In terms of processing, undergoes a tyrosination/detyrosination cycle, the cyclic removal and re-addition of a C-terminal tyrosine residue by the enzymes tubulin tyrosine carboxypeptidase (MATCAP1, VASH1 or VASH2) and tubulin tyrosine ligase (TTL), respectively. Tyrosination promotes microtubule interaction with CAP-Gly microtubule plus-end tracking proteins. Tyrosinated tubulins regulate the initiation of dynein-driven motility. Post-translationally, detyrosination is involved in metaphase plate congression by guiding chromosomes during mitosis. Detyrosination increases microtubules-dependent mechanotransduction in dystrophic cardiac and skeletal muscle. In cardiomyocytes, detyrosinated microtubules are required to resist to contractile compression during contraction.

The protein localises to the cytoplasm. Its subcellular location is the cytoskeleton. It catalyses the reaction GTP + H2O = GDP + phosphate + H(+). Its function is as follows. Tubulin is the major constituent of microtubules, a cylinder consisting of laterally associated linear protofilaments composed of alpha- and beta-tubulin heterodimers. Microtubules grow by the addition of GTP-tubulin dimers to the microtubule end, where a stabilizing cap forms. Below the cap, tubulin dimers are in GDP-bound state, owing to GTPase activity of alpha-tubulin. This Xenopus tropicalis (Western clawed frog) protein is Tubulin alpha chain (tuba).